A 576-amino-acid polypeptide reads, in one-letter code: MSTLLNSVLSMASPESSPRKAVGFVSHIPSGFLHFSSVSKGVARVLASTQITLSPKDSAFTITGSSWKPDLDSGSFSDDPRSDEPNLSDSFSHLESLVTGGHKPNVAHSTQLLYDLCKANRLKKAIRVIELMVSSGIIPDASAYTYLVNQLCKRGNVGYAMQLVEKMEDHGYPSNTVTYNALVRGLCMLGSLNQSLQFVERLMQKGLAPNAFTYSFLLEAAYKERGTDEAVKLLDEIIVKGGEPNLVSYNVLLTGFCKEGRTDDAMALFRELPAKGFKANVVSYNILLRCLCCDGRWEEANSLLAEMDGGDRAPSVVTYNILINSLAFHGRTEQALQVLKEMSKGNHQFRVTATSYNPVIARLCKEGKVDLVVKCLDEMIYRRCKPNEGTYNAIGSLCEHNSKVQEAFYIIQSLSNKQKCCTHDFYKSVITSLCRKGNTFAAFQLLYEMTRCGFDPDAHTYSALIRGLCLEGMFTGAMEVLSIMEESENCKPTVDNFNAMILGLCKIRRTDLAMEVFEMMVEKKRMPNETTYAILVEGIAHEDELELAKEVLDELRLRKVIGQNAVDRIVMQFNLD.

The transit peptide at 1–37 (MSTLLNSVLSMASPESSPRKAVGFVSHIPSGFLHFSS) directs the protein to the chloroplast. PPR repeat units lie at residues 105–139 (NVAH…GIIP), 140–174 (DASA…GYPS), 175–209 (NTVT…GLAP), 210–244 (NAFT…GGEP), 245–279 (NLVS…GFKA), 280–314 (NVVS…DRAP), 315–349 (SVVT…NHQF), 352–386 (TATS…RCKP), 387–417 (NEGT…LSNK), 422–456 (THDF…GFDP), 457–487 (DAHT…MEES), 493–527 (TVDN…KRMP), and 528–562 (NETT…KVIG).

This sequence belongs to the PPR family. P subfamily.

It localises to the plastid. It is found in the chloroplast. This chain is Pentatricopeptide repeat-containing protein At1g79080, chloroplastic, found in Arabidopsis thaliana (Mouse-ear cress).